The primary structure comprises 350 residues: UDP-3-O-acylglucosamine N-acyltransferase (350 aa).

Catalysis depends on H248, which acts as the Proton acceptor.

The protein belongs to the transferase hexapeptide repeat family. LpxD subfamily. In terms of assembly, homotrimer.

It catalyses the reaction a UDP-3-O-[(3R)-3-hydroxyacyl]-alpha-D-glucosamine + a (3R)-hydroxyacyl-[ACP] = a UDP-2-N,3-O-bis[(3R)-3-hydroxyacyl]-alpha-D-glucosamine + holo-[ACP] + H(+). The protein operates within bacterial outer membrane biogenesis; LPS lipid A biosynthesis. Catalyzes the N-acylation of UDP-3-O-acylglucosamine using 3-hydroxyacyl-ACP as the acyl donor. Is involved in the biosynthesis of lipid A, a phosphorylated glycolipid that anchors the lipopolysaccharide to the outer membrane of the cell. The chain is UDP-3-O-acylglucosamine N-acyltransferase from Nostoc punctiforme (strain ATCC 29133 / PCC 73102).